A 241-amino-acid chain; its full sequence is Biosynthetic peptidoglycan transglycosylase (241 aa).

The chain crosses the membrane as a helical span at residues 18-38 (GVIGIIALWMAGILIFAFLPV).

It belongs to the glycosyltransferase 51 family.

It is found in the cell inner membrane. The catalysed reaction is [GlcNAc-(1-&gt;4)-Mur2Ac(oyl-L-Ala-gamma-D-Glu-L-Lys-D-Ala-D-Ala)](n)-di-trans,octa-cis-undecaprenyl diphosphate + beta-D-GlcNAc-(1-&gt;4)-Mur2Ac(oyl-L-Ala-gamma-D-Glu-L-Lys-D-Ala-D-Ala)-di-trans,octa-cis-undecaprenyl diphosphate = [GlcNAc-(1-&gt;4)-Mur2Ac(oyl-L-Ala-gamma-D-Glu-L-Lys-D-Ala-D-Ala)](n+1)-di-trans,octa-cis-undecaprenyl diphosphate + di-trans,octa-cis-undecaprenyl diphosphate + H(+). It functions in the pathway cell wall biogenesis; peptidoglycan biosynthesis. Its function is as follows. Peptidoglycan polymerase that catalyzes glycan chain elongation from lipid-linked precursors. This is Biosynthetic peptidoglycan transglycosylase from Yersinia pseudotuberculosis serotype O:3 (strain YPIII).